Here is a 319-residue protein sequence, read N- to C-terminus: NADH-quinone oxidoreductase subunit H 1 (319 aa).

The next 9 helical transmembrane spans lie at 5-25 (ILTA…AGVF), 78-98 (LAPA…AFGE), 109-129 (VMFL…GALA), 147-167 (LAYE…AGSL), 179-199 (VWFI…GIAA), 214-234 (LVGG…FLGE), 238-258 (ILLV…GPWL), 262-282 (IWFG…RAAL), and 294-314 (AWKV…FIVV).

This sequence belongs to the complex I subunit 1 family. As to quaternary structure, NDH-1 is composed of 14 different subunits. Subunits NuoA, H, J, K, L, M, N constitute the membrane sector of the complex.

The protein resides in the cell inner membrane. It carries out the reaction a quinone + NADH + 5 H(+)(in) = a quinol + NAD(+) + 4 H(+)(out). In terms of biological role, NDH-1 shuttles electrons from NADH, via FMN and iron-sulfur (Fe-S) centers, to quinones in the respiratory chain. The immediate electron acceptor for the enzyme in this species is believed to be ubiquinone. Couples the redox reaction to proton translocation (for every two electrons transferred, four hydrogen ions are translocated across the cytoplasmic membrane), and thus conserves the redox energy in a proton gradient. This subunit may bind ubiquinone. The chain is NADH-quinone oxidoreductase subunit H 1 from Rhodopseudomonas palustris (strain BisA53).